The primary structure comprises 245 residues: TPR repeat-containing protein PA4299 (245 aa).

An N-terminal signal peptide occupies residues 1-16; that stretch reads MKALIGIGLCAALLGG. Cys17 is lipidated: N-palmitoyl cysteine. Cys17 carries the S-diacylglycerol cysteine lipid modification. 3 TPR repeats span residues 100–133, 135–167, and 169–200; these read PEAHHGLGLLALRNGDSARAVLELREAARLRPTE, RFRNDLGVALLKRGDRVGARFEFITALELQQGG, and LPATNLLGLLYLQGDREDAQRLIERLQLDARD. A disordered region spans residues 210–245; sequence SWGAVPTPGAAPASDDPLAELPAEANMHTAMANEAP.

It is found in the cell membrane. This chain is TPR repeat-containing protein PA4299, found in Pseudomonas aeruginosa (strain ATCC 15692 / DSM 22644 / CIP 104116 / JCM 14847 / LMG 12228 / 1C / PRS 101 / PAO1).